A 446-amino-acid polypeptide reads, in one-letter code: O-antigen polymerase (446 aa).

11 helical membrane-spanning segments follow: residues 11–31, 33–53, 58–78, 104–124, 147–167, 186–206, 211–231, 252–272, 355–375, 391–411, and 415–435; these read ICSYTFFMVNLFILILSVINE, FCEIAYVIISVSSVLFCVIII, QGGFLNPMTFCIISVFFFILI, IYVFYSLAVVNIPLAFTVLLY, QLSMILLWGGLFSAIFLIKSY, LYDELFWFTLSKYCYILSLLF, NFILYSLLIFITSIGYILVGL, LKIKWLLLVAILVTTISSLFL, IYLGWIIGSVALLLFAFSLAF, KLAYTYRLIIFLALPNLIYFA, and LFDFITKVLFIALFIGGLSIV.

Its subcellular location is the cell inner membrane. It catalyses the reaction n lipid-linked O-antigen repeat units = a lipid-linked O antigen + (n-1) polyisoprenyl diphosphate.. The protein operates within bacterial outer membrane biogenesis; LPS O-antigen biosynthesis. Its function is as follows. Polymerase involved in the biosynthesis of the lipopolysaccharide (LPS). Catalyzes the polymerization of the O-antigen repeat units on the periplasmic face of the inner membrane, leading to the formation of the lipid-linked O-antigen molecule. In vitro, shows a preference for bacteria-based, undecaprenyl-containing substrates rather than eukaryote-based, dolichol-containing substrates. In Escherichia coli, this protein is O-antigen polymerase.